Here is a 201-residue protein sequence, read N- to C-terminus: Pro-P-factor (201 aa).

An N-terminal signal peptide occupies residues 1 to 20 (MKITAVIALLFSLAAASPIP). 5 propeptides span residues 21–31 (VADPGVVSVSK), 58–65 (EFEAAPAK), 92–99 (EFEAAPEK), 126–133 (EFEAAPAK), and 160–201 (TEED…KFES). N-linked (GlcNAc...) asparagine glycans are attached at residues N187 and N194.

Proteolytically cleaved by kpr, probably at the C-terminal side of dibasic Lys-Arg residues. Post-translationally, glycosylated. Most of the precursor molecules are glycosylated on at least one site, but only a small proportion are glycosylated on both sites.

Its subcellular location is the secreted. In h- cells under nutritional starvation, P-factor induces alteration of cell morphology toward mating, arrest of the cell cycle at the G1 phase prior to the initiation of DNA synthesis and indirect transcriptional activation of the sxa2 gene which down-regulates the signaling pathway. This is Pro-P-factor (map2) from Schizosaccharomyces pombe (strain 972 / ATCC 24843) (Fission yeast).